The chain runs to 240 residues: 4-hydroxy-tetrahydrodipicolinate reductase (240 aa).

NAD(+) is bound by residues 79 to 81 (ATT) and 103 to 106 (SANM). Histidine 135 serves as the catalytic Proton donor/acceptor. Residue histidine 136 coordinates (S)-2,3,4,5-tetrahydrodipicolinate. The Proton donor role is filled by lysine 139. 145 to 146 (GT) serves as a coordination point for (S)-2,3,4,5-tetrahydrodipicolinate.

Belongs to the DapB family.

The protein localises to the cytoplasm. The enzyme catalyses (S)-2,3,4,5-tetrahydrodipicolinate + NAD(+) + H2O = (2S,4S)-4-hydroxy-2,3,4,5-tetrahydrodipicolinate + NADH + H(+). It catalyses the reaction (S)-2,3,4,5-tetrahydrodipicolinate + NADP(+) + H2O = (2S,4S)-4-hydroxy-2,3,4,5-tetrahydrodipicolinate + NADPH + H(+). It participates in amino-acid biosynthesis; L-lysine biosynthesis via DAP pathway; (S)-tetrahydrodipicolinate from L-aspartate: step 4/4. In terms of biological role, catalyzes the conversion of 4-hydroxy-tetrahydrodipicolinate (HTPA) to tetrahydrodipicolinate. The sequence is that of 4-hydroxy-tetrahydrodipicolinate reductase from Staphylococcus saprophyticus subsp. saprophyticus (strain ATCC 15305 / DSM 20229 / NCIMB 8711 / NCTC 7292 / S-41).